The chain runs to 318 residues: Ubiquinol oxidase (318 aa).

Residues 150-170 form a helical membrane-spanning segment; the sequence is VVVLETVAAIPGMVGGMFRHL. Glutamate 154, glutamate 193, and histidine 196 together coordinate Fe cation. The helical transmembrane segment at 212–232 threads the bilayer; that stretch reads MLIKLGQFLFFNGYMVFYFVA. Fe cation contacts are provided by glutamate 244, glutamate 295, and histidine 298.

This sequence belongs to the alternative oxidase family. Found as monomers and homodimers. Fe cation is required as a cofactor.

The protein resides in the mitosome membrane. The enzyme catalyses 2 a ubiquinol + O2 = 2 a ubiquinone + 2 H2O. Its function is as follows. Alternative oxidase which function may be to reoxidize reducing equivalents produced by glycolysis such as ubiquinol. The chain is Ubiquinol oxidase (AOX) from Trachipleistophora hominis (Microsporidian parasite).